Reading from the N-terminus, the 422-residue chain is QKLIRIRNPWGEVEWTGRWNDNCPNWNTVDPEVRERLAERHEDGEFWMSFSDFLRHYSRLEICNLTPDTLTSDTYKKWKLTKMDGNWRRGSTAGGCRNYPNTFWMNPQYVIKLEEEDEDQEDGESGCTFLVGLIQKHRRRQRKMGEDMHTIGFGIYEVPEELRGQTNIHLGKNFFLTTRARERSDTFINLREVLNRFKLPPGEYILVPSTFEPNKNGDFCVRVFSEKKADYQAVDDEIEADLEEADVSEDDIDDGFRRLFAQLAGEDAEISAFELQNILRRVLAKRQDIKTDGLSIETCKIMVDMLDSDGTGKLGLKEFYVLWTKIQKYQKIYREIDVDRSGTMNSYEMRKALEEAGFKLPCQLHEVIVARFADDQLIIDFDNFVRCLVRLETLFKIFKQLDPDNTGMIQLDLISWLCFSVL.

A Calpain catalytic domain is found at 1-66; it reads QKLIRIRNPW…YSRLEICNLT (66 aa). Residue N8 is part of the active site. 3 residues coordinate Ca(2+): E14, D21, and E45. The tract at residues 67–236 is domain III; it reads PDTLTSDTYK…KKADYQAVDD (170 aa). Residues 237-251 form a linker region; it reads EIEADLEEADVSEDD. Residues 252-422 are domain IV; sequence IDDGFRRLFA…LISWLCFSVL (171 aa). A264, D267, E269, E274, D307, D309, T311, K313, E318, D337, D339, S341, T343, E348, D380, and N383 together coordinate Ca(2+). 2 EF-hand domains span residues 294–327 and 324–359; these read LSIE…TKIQ and TKIQ…AGFK. Residues 389–422 enclose the EF-hand 3 domain; the sequence is VRLETLFKIFKQLDPDNTGMIQLDLISWLCFSVL.

Belongs to the peptidase C2 family. In terms of assembly, forms a heterodimer with a small (regulatory) subunit (CAPNS1). Interacts with CPEB3; this leads to cleavage of CPEB3. Requires Ca(2+) as cofactor. In terms of tissue distribution, ubiquitous.

It is found in the cytoplasm. The protein resides in the cell membrane. The catalysed reaction is Broad endopeptidase specificity.. Activated by 200-1000 micromolar concentrations of calcium and inhibited by calpastatin. Functionally, calcium-regulated non-lysosomal thiol-protease which catalyzes limited proteolysis of substrates involved in cytoskeletal remodeling and signal transduction. Proteolytically cleaves MYOC at 'Arg-226'. Proteolytically cleaves CPEB3 following neuronal stimulation which abolishes CPEB3 translational repressor activity, leading to translation of CPEB3 target mRNAs. This is Calpain-2 catalytic subunit (CAPN2) from Oryctolagus cuniculus (Rabbit).